The following is a 926-amino-acid chain: Bifunctional uridylyltransferase/uridylyl-removing enzyme (926 aa).

Positions 1-379 are uridylyltransferase; it reads MPVSFLSLAS…PKSRRSGASK (379 aa). The interval 380–736 is uridylyl-removing; it reads QIDGFPVIQG…GHEMPAYDAT (357 aa). Positions 496–618 constitute an HD domain; sequence VDEHAIRALD…VKSPERLRLL (123 aa). 2 ACT domains span residues 737–814 and 849–926; these read MISL…IRSS and VIEV…ISEK.

This sequence belongs to the GlnD family. It depends on Mg(2+) as a cofactor.

The catalysed reaction is [protein-PII]-L-tyrosine + UTP = [protein-PII]-uridylyl-L-tyrosine + diphosphate. It carries out the reaction [protein-PII]-uridylyl-L-tyrosine + H2O = [protein-PII]-L-tyrosine + UMP + H(+). With respect to regulation, uridylyltransferase (UTase) activity is inhibited by glutamine, while glutamine activates uridylyl-removing (UR) activity. Modifies, by uridylylation and deuridylylation, the PII regulatory proteins (GlnB and homologs), in response to the nitrogen status of the cell that GlnD senses through the glutamine level. Under low glutamine levels, catalyzes the conversion of the PII proteins and UTP to PII-UMP and PPi, while under higher glutamine levels, GlnD hydrolyzes PII-UMP to PII and UMP (deuridylylation). Thus, controls uridylylation state and activity of the PII proteins, and plays an important role in the regulation of nitrogen assimilation and metabolism. The chain is Bifunctional uridylyltransferase/uridylyl-removing enzyme from Zymomonas mobilis subsp. mobilis (strain ATCC 31821 / ZM4 / CP4).